The sequence spans 505 residues: Catalase (505 aa).

A disordered region spans residues 1–25 (MSQQDKKLTGVFGHPVSDRENSMTA). Residues His-56 and Asn-129 contribute to the active site. Tyr-339 lines the heme pocket.

It belongs to the catalase family. Homodimer. The cofactor is heme.

It carries out the reaction 2 H2O2 = O2 + 2 H2O. Functionally, decomposes hydrogen peroxide into water and oxygen; serves to protect cells from the toxic effects of hydrogen peroxide. The polypeptide is Catalase (katA) (Staphylococcus aureus (strain MSSA476)).